The chain runs to 94 residues: MFQKQQRIGLVIYLYYNRDARKVMKYGDLYYHSRRSRYLVIYINKEDMEEKLKDISRLTFVKEVKVSAFDDIDCDFVGNLHREPLEPQALPEQG.

The protein belongs to the UPF0298 family.

It is found in the cytoplasm. The protein is UPF0298 protein SEQ_1830 of Streptococcus equi subsp. equi (strain 4047).